We begin with the raw amino-acid sequence, 338 residues long: mRNA decay activator protein ZFP36L1 (338 aa).

The interval 1–111 (MTTTLVSATI…QKQPGSGQVN (111 aa)) is necessary and sufficient for the association with mRNA decay enzymes and mRNA decay activation. At Ser54 the chain carries Phosphoserine; by MAPKAPK2. At Ser90 the chain carries Phosphoserine; by PKB/AKT1. Ser92 is subject to Phosphoserine; by PKB/AKT1 and MAPKAPK2. Positions 93 to 113 (EGGERLLPTQKQPGSGQVNSS) are disordered. A compositionally biased stretch (polar residues) spans 101–113 (TQKQPGSGQVNSS). 2 C3H1-type zinc fingers span residues 114–142 (RYKT…HGIH) and 152–180 (KYKT…HNAE). Residues 185-338 (LAGGRDLSAD…IFSRLSISDD (154 aa)) are necessary for mRNA decay activation. Ser203 is modified (phosphoserine; by PKB/AKT1 and MAPKAPK2). The tract at residues 273-338 (SPTTFLFRPM…IFSRLSISDD (66 aa)) is disordered. A compositionally biased stretch (low complexity) spans 305-318 (YLSSSSSSHSGSDS). Ser318 carries the post-translational modification Phosphoserine. Ser334 carries the phosphoserine; by RPS6KA1 modification.

In terms of assembly, associates with the cytoplasmic CCR4-NOT deadenylase and RNA exosome complexes to trigger ARE-containing mRNA deadenylation and decay processes. Interacts with CNOT1. Interacts (via N-terminus) with CNOT6. Interacts with CNOT7; this interaction is inhibited in response to phorbol 12-myristate 13-acetate (PMA) treatment in a p38 MAPK-dependent manner. Interacts with DCP1A. Interacts (via N-terminus) with DCP2. Interacts (via N-terminus) with EXOSC2. Interacts with XRN1. Interacts (via phosphorylated form) with YWHAB; this interaction occurs in a protein kinase AKT1-dependent manner. Interacts (via phosphorylated form) with YWHAZ; this interaction occurs in a p38 MAPK- and AKT-signaling pathways. Post-translationally, phosphorylated. Phosphorylated by RPS6KA1 at Ser-334 upon phorbol 12-myristate 13-acetate (PMA) treatment; this phosphorylation results in dissociation of the CCR4-NOT deadenylase complex and induces p38 MAPK-mediated stabilization of the low-density lipoprotein receptor LDLR mRNA. Phosphorylated by protein kinase AKT1 at Ser-92 and Ser-203 in response to insulin; these phosphorylations stabilize ZFP36L1, increase the association with 14-3-3 proteins and mediate ARE-containing mRNA stabilization. AKT1-mediated phosphorylation at Ser-92 does not impair ARE-containing RNA-binding. Phosphorylated at Ser-54, Ser-92 and Ser-203 by MAPKAPK2; these phosphorylations increase the association with 14-3-3 proteins and mediate ARE-containing mRNA stabilization in a protein kinase AKT1-independent manner. MAPKAPK2-mediated phosphorylations at Ser-54, Ser-92 and Ser-203 do not impair ARE-containing RNA-binding. Phosphorylations increase the association with 14-3-3 proteins and mediate ARE-containing mRNA stabilization during early adipogenesis in a p38 MAPK- and AKT-dependent manner. Phosphorylated by protein kinase AKT1 at Ser-92. Ubiquitinated. Ubiquitination leads to proteasomal degradation, a process inhibited by phosphorylations at Ser-90, Ser-92 and Ser-203.

The protein localises to the nucleus. It localises to the cytoplasm. It is found in the cytoplasmic granule. Its subcellular location is the P-body. In terms of biological role, zinc-finger RNA-binding protein that destabilizes several cytoplasmic AU-rich element (ARE)-containing mRNA transcripts by promoting their poly(A) tail removal or deadenylation, and hence provide a mechanism for attenuating protein synthesis. Acts as a 3'-untranslated region (UTR) ARE mRNA-binding adapter protein to communicate signaling events to the mRNA decay machinery. Functions by recruiting the CCR4-NOT deadenylase complex and components of the cytoplasmic RNA decay machinery to the bound ARE-containing mRNAs, and hence promotes ARE-mediated mRNA deadenylation and decay processes. Also induces the degradation of ARE-containing mRNAs even in absence of poly(A) tail. Binds to 3'-UTR ARE of numerous mRNAs. Positively regulates early adipogenesis by promoting ARE-mediated mRNA decay of immediate early genes (IEGs). Promotes ARE-mediated mRNA decay of mineralocorticoid receptor NR3C2 mRNA in response to hypertonic stress. Negatively regulates hematopoietic/erythroid cell differentiation by promoting ARE-mediated mRNA decay of the transcription factor STAT5B mRNA. Positively regulates monocyte/macrophage cell differentiation by promoting ARE-mediated mRNA decay of the cyclin-dependent kinase CDK6 mRNA. Promotes degradation of ARE-containing pluripotency-associated mRNAs in embryonic stem cells (ESCs), such as NANOG, through a fibroblast growth factor (FGF)-induced MAPK-dependent signaling pathway, and hence attenuates ESC self-renewal and positively regulates mesendoderm differentiation. May play a role in mediating pro-apoptotic effects in malignant B-cells by promoting ARE-mediated mRNA decay of BCL2 mRNA. In association with ZFP36L2 maintains quiescence on developing B lymphocytes by promoting ARE-mediated decay of several mRNAs encoding cell cycle regulators that help B cells progress through the cell cycle, and hence ensuring accurate variable-diversity-joining (VDJ) recombination and functional immune cell formation. Together with ZFP36L2 is also necessary for thymocyte development and prevention of T-cell acute lymphoblastic leukemia (T-ALL) transformation by promoting ARE-mediated mRNA decay of the oncogenic transcription factor NOTCH1 mRNA. Participates in the delivery of target ARE-mRNAs to processing bodies (PBs). In addition to its cytosolic mRNA-decay function, plays a role in the regulation of nuclear mRNA 3'-end processing; modulates mRNA 3'-end maturation efficiency of the DLL4 mRNA through binding with an ARE embedded in a weak noncanonical polyadenylation (poly(A)) signal in endothelial cells. Also involved in the regulation of stress granule (SG) and P-body (PB) formation and fusion. Plays a role in vasculogenesis and endocardial development. Plays a role in the regulation of keratinocyte proliferation, differentiation and apoptosis. Plays a role in myoblast cell differentiation. The polypeptide is mRNA decay activator protein ZFP36L1 (Rattus norvegicus (Rat)).